The primary structure comprises 764 residues: 5-methyltetrahydropteroyltriglutamate--homocysteine methyltransferase (764 aa).

5-methyltetrahydropteroyltri-L-glutamate contacts are provided by residues 16–19 (RELK) and K115. L-homocysteine-binding positions include 435 to 437 (IGS) and E488. L-methionine-binding positions include 435–437 (IGS) and E488. 5-methyltetrahydropteroyltri-L-glutamate is bound by residues 519–520 (RC) and W565. D603 contributes to the L-homocysteine binding site. D603 is an L-methionine binding site. Residue E609 participates in 5-methyltetrahydropteroyltri-L-glutamate binding. H645, C647, and E669 together coordinate Zn(2+). The active-site Proton donor is H698. C730 contributes to the Zn(2+) binding site.

It belongs to the vitamin-B12 independent methionine synthase family. Zn(2+) serves as cofactor.

The catalysed reaction is 5-methyltetrahydropteroyltri-L-glutamate + L-homocysteine = tetrahydropteroyltri-L-glutamate + L-methionine. It functions in the pathway amino-acid biosynthesis; L-methionine biosynthesis via de novo pathway; L-methionine from L-homocysteine (MetE route): step 1/1. Functionally, catalyzes the transfer of a methyl group from 5-methyltetrahydrofolate to homocysteine resulting in methionine formation. This is 5-methyltetrahydropteroyltriglutamate--homocysteine methyltransferase from Burkholderia mallei (strain NCTC 10247).